Reading from the N-terminus, the 303-residue chain is UDP-3-O-acyl-N-acetylglucosamine deacetylase (303 aa).

Zn(2+)-binding residues include His-78, His-237, and Asp-241. His-264 serves as the catalytic Proton donor.

The protein belongs to the LpxC family. Requires Zn(2+) as cofactor.

It carries out the reaction a UDP-3-O-[(3R)-3-hydroxyacyl]-N-acetyl-alpha-D-glucosamine + H2O = a UDP-3-O-[(3R)-3-hydroxyacyl]-alpha-D-glucosamine + acetate. The protein operates within glycolipid biosynthesis; lipid IV(A) biosynthesis; lipid IV(A) from (3R)-3-hydroxytetradecanoyl-[acyl-carrier-protein] and UDP-N-acetyl-alpha-D-glucosamine: step 2/6. In terms of biological role, catalyzes the hydrolysis of UDP-3-O-myristoyl-N-acetylglucosamine to form UDP-3-O-myristoylglucosamine and acetate, the committed step in lipid A biosynthesis. The sequence is that of UDP-3-O-acyl-N-acetylglucosamine deacetylase from Pseudomonas fluorescens (strain Pf0-1).